Reading from the N-terminus, the 606-residue chain is Sulfite reductase [NADPH] flavoprotein alpha-component (606 aa).

Residues 68–206 (ITILSASQTG…AAEAWRKEVT (139 aa)) form the Flavodoxin-like domain. Residues 74-79 (SQTGNA), 121-124 (STQG), and 157-166 (LGDITYEHFA) each bind FMN. The 215-residue stretch at 240-454 (ESPLTATLSV…VEHNDNFRLP (215 aa)) folds into the FAD-binding FR-type domain. FAD contacts are provided by residues Thr-328, Gln-362, 392-395 (RLYS), 410-412 (TVG), Tyr-416, and 425-428 (GGAS). Residues 525–526 (SR), 531–535 (KVYVQ), and Asp-568 contribute to the NADP(+) site. Residue Tyr-606 coordinates FAD.

It belongs to the NADPH-dependent sulphite reductase flavoprotein subunit CysJ family. The protein in the N-terminal section; belongs to the flavodoxin family. This sequence in the C-terminal section; belongs to the flavoprotein pyridine nucleotide cytochrome reductase family. In terms of assembly, alpha(8)-beta(8). The alpha component is a flavoprotein, the beta component is a hemoprotein. FAD is required as a cofactor. FMN serves as cofactor.

The enzyme catalyses hydrogen sulfide + 3 NADP(+) + 3 H2O = sulfite + 3 NADPH + 4 H(+). The protein operates within sulfur metabolism; hydrogen sulfide biosynthesis; hydrogen sulfide from sulfite (NADPH route): step 1/1. In terms of biological role, component of the sulfite reductase complex that catalyzes the 6-electron reduction of sulfite to sulfide. This is one of several activities required for the biosynthesis of L-cysteine from sulfate. The flavoprotein component catalyzes the electron flow from NADPH -&gt; FAD -&gt; FMN to the hemoprotein component. In Zymomonas mobilis subsp. mobilis (strain ATCC 31821 / ZM4 / CP4), this protein is Sulfite reductase [NADPH] flavoprotein alpha-component.